Here is a 174-residue protein sequence, read N- to C-terminus: Protein C2-DOMAIN ABA-RELATED 2 (174 aa).

At methionine 1 the chain carries N-acetylmethionine. In terms of domain architecture, C2 spans 1-104 (MENMLGLLRL…EAIRIQNQLG (104 aa)). Ca(2+) contacts are provided by arginine 21, aspartate 22, aspartate 27, aspartate 73, arginine 74, aspartate 75, and aspartate 81.

This sequence belongs to the plant CAR protein family. Binds to PYR/PYL/RCAR abscisic acid intracellular receptors in an ABA-independent manner, both at the plasma membrane and in the nucleus. Requires Ca(2+) as cofactor.

It is found in the cell membrane. It localises to the nucleus. Its function is as follows. Stimulates the GTPase/ATPase activities of Obg-like ATPases. Mediates the transient calcium-dependent interaction of PYR/PYL/RCAR abscisic acid (ABA) receptors with the plasma membrane and thus regulates ABA sensitivity. This chain is Protein C2-DOMAIN ABA-RELATED 2, found in Arabidopsis thaliana (Mouse-ear cress).